Reading from the N-terminus, the 156-residue chain is 6,7-dimethyl-8-ribityllumazine synthase (156 aa).

5-amino-6-(D-ribitylamino)uracil-binding positions include Phe22, 56-58 (AFE), and 80-82 (AVI). 85-86 (ST) contributes to the (2S)-2-hydroxy-3-oxobutyl phosphate binding site. His88 (proton donor) is an active-site residue. Phe113 lines the 5-amino-6-(D-ribitylamino)uracil pocket. Residue Arg127 coordinates (2S)-2-hydroxy-3-oxobutyl phosphate.

The protein belongs to the DMRL synthase family.

The enzyme catalyses (2S)-2-hydroxy-3-oxobutyl phosphate + 5-amino-6-(D-ribitylamino)uracil = 6,7-dimethyl-8-(1-D-ribityl)lumazine + phosphate + 2 H2O + H(+). It participates in cofactor biosynthesis; riboflavin biosynthesis; riboflavin from 2-hydroxy-3-oxobutyl phosphate and 5-amino-6-(D-ribitylamino)uracil: step 1/2. Catalyzes the formation of 6,7-dimethyl-8-ribityllumazine by condensation of 5-amino-6-(D-ribitylamino)uracil with 3,4-dihydroxy-2-butanone 4-phosphate. This is the penultimate step in the biosynthesis of riboflavin. The polypeptide is 6,7-dimethyl-8-ribityllumazine synthase (Caldicellulosiruptor saccharolyticus (strain ATCC 43494 / DSM 8903 / Tp8T 6331)).